The following is a 738-amino-acid chain: MKKLLTSLMLSTASFMLLLTVSNKAYAYEETETFTFEIYNMNSVVANPGLYNYLVDLTDGYGYGQMQHVTVDISLLDYNTAYLEKNLNGFNLFFTSDTGVYEFGIDASGNIELLNDPVAHDEYSLTFTGLNNAYQDLFYEEIVVEFEIVSFDSLEGVGTLDPNPYVVLSELLTENYEYNETIAPFIWVNDVQYQNYYSVYDIGSDLALIEIDGPTLNIYSDRFEEYNETFDVGDEFRIIFKIYKTWTQAHDYGRIRTNASTLYLNQQSDTSALLSHSESTNVINVNNIAVGDEIVMQSPYTDFSVSYGNVGFPRTYLVEQENIAAVKMIKNSSDNTNYTFILFYWENGSVVSRTVNNINLANRNSLNIKFDGGFRKALNYSDVMVANVDLLTPLEDFLPNMVAWDAIDGDISDSIVITDNDGYSPDTVGIYNVEFSVTNSNGQTSSIIAPVHVVDIVNPVINGVSDTVHISYDQTFNVTNWVNSLTVSDNYYTGLSISIKENTYTVNKNKLGTYKITVQAVDPSGNIGTLTRTIVVNDGIGPVFNGINTITASINENITVEQIKAGLAAIDAIDGNVTTSIVVDSDNLTGKANTVGVYEVVFRAVDAAGNQTFHTVTVSIVASPPGFYILNSNSVRLLPGANLTIEQILNILNASDAENISTNYTVSVPGTYNLSFTLYGESHQVSITVLGQNDSIIPTPVIPGESNPGFNITYALIIGLSAIALLATTVTILNKKRK.

A signal peptide spans 1–27; the sequence is MKKLLTSLMLSTASFMLLLTVSNKAYA. The next 2 membrane-spanning stretches (helical) occupy residues 612–632 and 712–732; these read TFHTVTVSIVASPPGFYILNS and ITYALIIGLSAIALLATTVTI.

Its subcellular location is the membrane. This is an uncharacterized protein from Mycoplasma (Bacteriophage L2).